We begin with the raw amino-acid sequence, 375 residues long: Chaperone protein DnaJ (375 aa).

The J domain maps to 5–70 (DFYETLGVAK…QKRAAYDRYG (66 aa)). Residues 136–214 (GKTAQIRVPT…CHGQGRVTEE (79 aa)) form a CR-type zinc finger. Positions 149, 152, 166, 169, 188, 191, 202, and 205 each coordinate Zn(2+). CXXCXGXG motif repeat units follow at residues 149-156 (CDVCSGSG), 166-173 (CGTCQGSG), 188-195 (CPTCHGRG), and 202-209 (CPKCHGQG).

The protein belongs to the DnaJ family. As to quaternary structure, homodimer. Zn(2+) serves as cofactor.

The protein localises to the cytoplasm. In terms of biological role, participates actively in the response to hyperosmotic and heat shock by preventing the aggregation of stress-denatured proteins and by disaggregating proteins, also in an autonomous, DnaK-independent fashion. Unfolded proteins bind initially to DnaJ; upon interaction with the DnaJ-bound protein, DnaK hydrolyzes its bound ATP, resulting in the formation of a stable complex. GrpE releases ADP from DnaK; ATP binding to DnaK triggers the release of the substrate protein, thus completing the reaction cycle. Several rounds of ATP-dependent interactions between DnaJ, DnaK and GrpE are required for fully efficient folding. Also involved, together with DnaK and GrpE, in the DNA replication of plasmids through activation of initiation proteins. This is Chaperone protein DnaJ from Rhizobium etli (strain CIAT 652).